A 244-amino-acid chain; its full sequence is Flagellar brake protein YcgR (244 aa).

In terms of domain architecture, PilZ spans 112 to 230 (QRREYFRIGA…ERELQRIIFS (119 aa)).

This sequence belongs to the YcgR family. As to quaternary structure, monomer. Interacts with the flagellar basal bodies.

It is found in the bacterial flagellum basal body. In terms of biological role, acts as a flagellar brake, regulating swimming and swarming in a bis-(3'-5') cyclic diguanylic acid (c-di-GMP)-dependent manner. Overexpression of this gene decreases swimming and swarming motility; those cells that are motile turn predominantly counterclockwise. The D-118 mutant is still able to bind FliM but no longer affects motility upon overexpression. Binds 1 c-di-GMP dimer per subunit. This is Flagellar brake protein YcgR (ycgR) from Salmonella typhimurium (strain LT2 / SGSC1412 / ATCC 700720).